A 406-amino-acid chain; its full sequence is 4-hydroxy-3-methylbut-2-en-1-yl diphosphate synthase (ferredoxin) (406 aa).

C315, C318, C349, and E356 together coordinate [4Fe-4S] cluster.

This sequence belongs to the IspG family. [4Fe-4S] cluster is required as a cofactor.

It catalyses the reaction (2E)-4-hydroxy-3-methylbut-2-enyl diphosphate + 2 oxidized [2Fe-2S]-[ferredoxin] + H2O = 2-C-methyl-D-erythritol 2,4-cyclic diphosphate + 2 reduced [2Fe-2S]-[ferredoxin] + H(+). Its pathway is isoprenoid biosynthesis; isopentenyl diphosphate biosynthesis via DXP pathway; isopentenyl diphosphate from 1-deoxy-D-xylulose 5-phosphate: step 5/6. Converts 2C-methyl-D-erythritol 2,4-cyclodiphosphate (ME-2,4cPP) into 1-hydroxy-2-methyl-2-(E)-butenyl 4-diphosphate. The polypeptide is 4-hydroxy-3-methylbut-2-en-1-yl diphosphate synthase (ferredoxin) (Microcystis aeruginosa (strain NIES-843 / IAM M-2473)).